The chain runs to 208 residues: Large ribosomal subunit protein uL4 (208 aa).

The tract at residues 44 to 89 is disordered; the sequence is RRQGTHKAKNRSEVRGGGRKPYRQKGTGHARQGSTRSPLMTGGGTI. A compositionally biased stretch (basic residues) spans 60–71; sequence GGRKPYRQKGTG.

The protein belongs to the universal ribosomal protein uL4 family. In terms of assembly, part of the 50S ribosomal subunit.

Functionally, one of the primary rRNA binding proteins, this protein initially binds near the 5'-end of the 23S rRNA. It is important during the early stages of 50S assembly. It makes multiple contacts with different domains of the 23S rRNA in the assembled 50S subunit and ribosome. Forms part of the polypeptide exit tunnel. The protein is Large ribosomal subunit protein uL4 of Chlorobium phaeobacteroides (strain BS1).